The following is a 489-amino-acid chain: Threonine/serine exporter (489 aa).

Transmembrane regions (helical) follow at residues 151–171, 174–194, 206–226, 233–253, 268–288, 314–334, 335–355, 356–376, 381–401, and 420–440; these read GFPV…VLLG, WQVS…TSFL, VVGG…ALQF, SQII…VQSL, FFET…GIQL, IIAG…EWSS, VIIA…FVVY, LGPV…GGLL, LIPP…GLAI, and IAVA…GEWI. The disordered stretch occupies residues 464-489; that stretch reads FQEEAEQNQRRQRKRPKTNQRFGNKR. Basic residues predominate over residues 473-489; sequence RRQRKRPKTNQRFGNKR.

It belongs to the ThrE exporter (TC 2.A.79) family.

It localises to the cell membrane. It catalyses the reaction L-threonine(in) + H(+)(out) = L-threonine(out) + H(+)(in). With respect to regulation, transport is inhibited by the proton ionophore carbonyl cyanide m-chlorophenylhydrazone (CCCP). Functionally, catalyzes the export of L-threonine and L-serine from the cell to the extracellular environment. Export is dependent on the proton motive force. This Corynebacterium glutamicum (Brevibacterium saccharolyticum) protein is Threonine/serine exporter.